We begin with the raw amino-acid sequence, 235 residues long: Probable inactive serine protease 37 (235 aa).

An N-terminal signal peptide occupies residues 1 to 19 (MKYVFYLGVLAGTFFFADS). In terms of domain architecture, Peptidase S1 spans 20–233 (SVQKEDPAPY…YVSWIENTAK (214 aa)). 3 disulfides stabilise this stretch: C40–C56, C131–C198, and C163–C177.

The protein belongs to the peptidase S1 family. In terms of tissue distribution, testis-specific. Expressed in spermatids (at protein level).

The protein resides in the cytoplasmic vesicle. Its subcellular location is the secretory vesicle. It is found in the acrosome. It localises to the secreted. Its function is as follows. Plays a role in male fertility. May have a role in sperm migration or binding to zona-intact eggs. Involved in the activation of the proacrosin/acrosin system. This chain is Probable inactive serine protease 37, found in Homo sapiens (Human).